The following is a 577-amino-acid chain: MFS-type transporter pgmG (577 aa).

Residues 1–32 (MSETVTQTETDQRPATARSLGAEEKEAKSDEQ) are disordered. The span at 21–31 (GAEEKEAKSDE) shows a compositional bias: basic and acidic residues. 8 consecutive transmembrane segments (helical) span residues 45 to 65 (FIVI…NTIV), 84 to 104 (WLSV…SKIY), 111 to 131 (WLYL…GAAP), 141 to 161 (ALAG…LSVN), 174 to 194 (TGLT…GFAV), 218 to 238 (PLTV…LFML), 259 to 279 (LGTI…NFGG), and 292 to 312 (CFVV…YCIG). Residue Asn-317 is glycosylated (N-linked (GlcNAc...) asparagine). A helical membrane pass occupies residues 330-350 (FIILFVQTASVATVFFVPIYF). N-linked (GlcNAc...) asparagine glycosylation is present at Asn-360. 5 consecutive transmembrane segments (helical) span residues 363-383 (AIDA…AMIL), 395-415 (MPWY…MYTI), 426-446 (GYMI…FAVA), 457-477 (VATG…LAIA), and 532-552 (ISQV…LAIF).

The protein belongs to the major facilitator superfamily. TCR/Tet family.

It localises to the membrane. Its function is as follows. MFS-type transporter; part of the gene cluster that mediates the biosynthesis of pleosporalin A, ascomycone A, as well as a third cryptic naphthoquinone derived pigment, all responsible for the coloration of conidia. Seems not to be involved in pigment biosynthesis although its expression is regulated by the cluster-specific transcription factor pgmR. This chain is MFS-type transporter pgmG, found in Aspergillus terreus (strain NIH 2624 / FGSC A1156).